Reading from the N-terminus, the 950-residue chain is MORC family CW-type zinc finger protein 1 (950 aa).

Residues 281 to 342 (KGKFKTEVQK…TKHKSLRQKQ (62 aa)) adopt a coiled-coil conformation. Residues 465-530 (SLESLQWRRR…SCNQIERLPS (66 aa)) form a CW-type zinc finger. Zn(2+) contacts are provided by C485, C488, C511, and C522. Disordered stretches follow at residues 532–551 (PLGTVNRRPPSKDERERQLQ) and 679–700 (KKQQSESLVQAGKASTDVASSR). Residues 541 to 550 (PSKDERERQL) show a composition bias toward basic and acidic residues. Residues 885–916 (LGQCELKRKRTEEKLSDLRAKLALLLQKLQLG) adopt a coiled-coil conformation.

In terms of tissue distribution, expressed at very low level in male germ cells.

Its subcellular location is the nucleus. In terms of biological role, required for spermatogenesis. Essential for de novo DNA methylation and silencing of transposable elements in the male embryonic germ cells. Not required for piRNA biosynthesis. The sequence is that of MORC family CW-type zinc finger protein 1 from Mus musculus (Mouse).